A 436-amino-acid chain; its full sequence is Hydrogenobyrinate a,c-diamide synthase (436 aa).

Residues 244 to 435 form the GATase cobBQ-type domain; sequence RIAVARDDAF…MHVIDFSGEA (192 aa). The Nucleophile role is filled by C327.

The protein belongs to the CobB/CbiA family. Mg(2+) serves as cofactor.

It carries out the reaction hydrogenobyrinate + 2 L-glutamine + 2 ATP + 2 H2O = hydrogenobyrinate a,c-diamide + 2 L-glutamate + 2 ADP + 2 phosphate + 2 H(+). It functions in the pathway cofactor biosynthesis; adenosylcobalamin biosynthesis; cob(II)yrinate a,c-diamide from precorrin-2 (aerobic route): step 9/10. Functionally, catalyzes the ATP-dependent amidation of the two carboxylate groups at positions a and c of hydrogenobyrinate, using either L-glutamine or ammonia as the nitrogen source. This Brucella ovis (strain ATCC 25840 / 63/290 / NCTC 10512) protein is Hydrogenobyrinate a,c-diamide synthase.